The primary structure comprises 448 residues: Beta-glucosidase A (448 aa).

Glu-166 acts as the Proton donor in catalysis. The active-site Nucleophile is the Glu-355.

It belongs to the glycosyl hydrolase 1 family.

The catalysed reaction is Hydrolysis of terminal, non-reducing beta-D-glucosyl residues with release of beta-D-glucose.. It participates in glycan metabolism; cellulose degradation. The polypeptide is Beta-glucosidase A (bglA) (Acetivibrio thermocellus (strain ATCC 27405 / DSM 1237 / JCM 9322 / NBRC 103400 / NCIMB 10682 / NRRL B-4536 / VPI 7372) (Clostridium thermocellum)).